The sequence spans 156 residues: Ribosomal RNA large subunit methyltransferase H (156 aa).

S-adenosyl-L-methionine is bound by residues L73, G104, and 123-128 (LSSLTL).

Belongs to the RNA methyltransferase RlmH family. As to quaternary structure, homodimer.

The protein localises to the cytoplasm. The catalysed reaction is pseudouridine(1915) in 23S rRNA + S-adenosyl-L-methionine = N(3)-methylpseudouridine(1915) in 23S rRNA + S-adenosyl-L-homocysteine + H(+). Functionally, specifically methylates the pseudouridine at position 1915 (m3Psi1915) in 23S rRNA. This chain is Ribosomal RNA large subunit methyltransferase H, found in Bordetella bronchiseptica (strain ATCC BAA-588 / NCTC 13252 / RB50) (Alcaligenes bronchisepticus).